Here is a 63-residue protein sequence, read N- to C-terminus: Large ribosomal subunit protein bL32 (63 aa).

The tract at residues 1–23 is disordered; sequence MATPKAKVSKSRRDKRRAQFTAR. The span at 7-18 shows a compositional bias: basic residues; sequence KVSKSRRDKRRA.

The protein belongs to the bacterial ribosomal protein bL32 family.

In Prosthecochloris aestuarii (strain DSM 271 / SK 413), this protein is Large ribosomal subunit protein bL32.